The chain runs to 321 residues: 5,10-methylenetetrahydromethanopterin reductase (321 aa).

This sequence belongs to the mer family.

Its subcellular location is the cytoplasm. It carries out the reaction 5-methyl-5,6,7,8-tetrahydromethanopterin + oxidized coenzyme F420-(gamma-L-Glu)(n) + H(+) = 5,10-methylenetetrahydromethanopterin + reduced coenzyme F420-(gamma-L-Glu)(n). It functions in the pathway one-carbon metabolism; methanogenesis from CO(2); methyl-coenzyme M from 5,10-methylene-5,6,7,8-tetrahydromethanopterin: step 1/2. Catalyzes the reversible reduction of methylene-H(4)MPT to methyl-H(4)MPT. This chain is 5,10-methylenetetrahydromethanopterin reductase, found in Methanothermobacter thermautotrophicus (strain ATCC 29096 / DSM 1053 / JCM 10044 / NBRC 100330 / Delta H) (Methanobacterium thermoautotrophicum).